A 50-amino-acid polypeptide reads, in one-letter code: Large ribosomal subunit protein bL33 (50 aa).

The protein belongs to the bacterial ribosomal protein bL33 family.

In Citrifermentans bemidjiense (strain ATCC BAA-1014 / DSM 16622 / JCM 12645 / Bem) (Geobacter bemidjiensis), this protein is Large ribosomal subunit protein bL33.